The following is a 182-amino-acid chain: GTP cyclohydrolase 1 (182 aa).

Zn(2+)-binding residues include Cys73, His76, and Cys144.

The protein belongs to the GTP cyclohydrolase I family. In terms of assembly, homomer.

The catalysed reaction is GTP + H2O = 7,8-dihydroneopterin 3'-triphosphate + formate + H(+). It functions in the pathway cofactor biosynthesis; 7,8-dihydroneopterin triphosphate biosynthesis; 7,8-dihydroneopterin triphosphate from GTP: step 1/1. The chain is GTP cyclohydrolase 1 from Hydrogenobaculum sp. (strain Y04AAS1).